The following is a 232-amino-acid chain: Large ribosomal subunit protein uL1 (232 aa).

It belongs to the universal ribosomal protein uL1 family. In terms of assembly, part of the 50S ribosomal subunit.

Its function is as follows. Binds directly to 23S rRNA. The L1 stalk is quite mobile in the ribosome, and is involved in E site tRNA release. Protein L1 is also a translational repressor protein, it controls the translation of the L11 operon by binding to its mRNA. This is Large ribosomal subunit protein uL1 from Thermosipho melanesiensis (strain DSM 12029 / CIP 104789 / BI429).